A 1328-amino-acid polypeptide reads, in one-letter code: ABC transporter G family member 2 (1328 aa).

An ABC transporter 1 domain is found at 53–299 (VTARNLSMSI…FEGLGFKLPK (247 aa)). 91 to 98 (GSPGCGKT) is an ATP binding site. One can recognise an ABC transmembrane type-2 1 domain in the interval 388 to 665 (ISSQVAVRMR…FGMYFFLKNV (278 aa)). The next 7 helical transmembrane spans lie at 398–418 (IIKS…LDLN), 428–448 (LIFF…AILF), 477–497 (IPIA…MCGL), 504–524 (FIYF…FFKM), 534–554 (LASV…GFMA), 559–579 (IGGW…FEGL), and 642–662 (IDLL…YFFL). Positions 670–691 (RASDPKNDKRSKKASKRSKKIK) are disordered. Over residues 678 to 689 (KRSKKASKRSKK) the composition is skewed to basic residues. The 240-residue stretch at 721 to 960 (VYEVDVKKDG…DLLGYFENHG (240 aa)) folds into the ABC transporter 2 domain. Position 755 to 762 (755 to 762 (GPSGAGKS)) interacts with ATP. The 238-residue stretch at 1049–1286 (VRRVQNIRTR…PICPITNGNQ (238 aa)) folds into the ABC transmembrane type-2 2 domain. Helical transmembrane passes span 1059 to 1076 (LMRS…FVRM), 1087 to 1107 (VSIL…SIPI), 1128 to 1148 (IYLF…AIIY), 1172 to 1192 (FISF…ATVL), 1197 to 1217 (IAHA…GFMI), and 1303 to 1323 (AVIF…LKFI).

Belongs to the ABC transporter superfamily. ABCG family. PDR (TC 3.A.1.205) subfamily.

Its subcellular location is the endosome membrane. Its function is as follows. Required for endocytosis and endosomal pH regulation. This Dictyostelium discoideum (Social amoeba) protein is ABC transporter G family member 2 (abcG2).